The following is a 191-amino-acid chain: Cytochrome c biogenesis ATP-binding export protein CcmA (191 aa).

The ABC transporter domain maps to 6-189; it reads LVATDIACRR…RVRTLAIRNF (184 aa). 38-45 provides a ligand contact to ATP; the sequence is GANGIGKS.

Belongs to the ABC transporter superfamily. CcmA exporter (TC 3.A.1.107) family. The complex is composed of two ATP-binding proteins (CcmA) and two transmembrane proteins (CcmB).

Its subcellular location is the cell inner membrane. The enzyme catalyses heme b(in) + ATP + H2O = heme b(out) + ADP + phosphate + H(+). Functionally, part of the ABC transporter complex CcmAB involved in the biogenesis of c-type cytochromes; once thought to export heme, this seems not to be the case, but its exact role is uncertain. Responsible for energy coupling to the transport system. In Novosphingobium aromaticivorans (strain ATCC 700278 / DSM 12444 / CCUG 56034 / CIP 105152 / NBRC 16084 / F199), this protein is Cytochrome c biogenesis ATP-binding export protein CcmA.